The chain runs to 1040 residues: Multidrug resistance protein MdtB (1040 aa).

Transmembrane regions (helical) follow at residues 16–36 (FILR…AGLV), 342–362 (DVQF…YLFL), 373–393 (IAVP…GFSV), 396–416 (LTLM…IVVI), 440–460 (IGFT…PLLF), 472–492 (FAVT…TLTP), 537–557 (WITL…YIVI), 865–885 (STIW…GVLY), 888–908 (FIHP…ALLA), 911–931 (ISGS…IGIV), 968–988 (ILMT…STGV), and 1002–1022 (GGLV…YLLF).

The protein belongs to the resistance-nodulation-cell division (RND) (TC 2.A.6) family. MdtB subfamily. In terms of assembly, part of a tripartite efflux system composed of MdtA, MdtB and MdtC. MdtB forms a heteromultimer with MdtC.

It localises to the cell inner membrane. The chain is Multidrug resistance protein MdtB from Musicola paradisiaca (strain Ech703) (Dickeya paradisiaca).